Reading from the N-terminus, the 94-residue chain is MMGLSLASAVLLASLLSLHLGTATRGSDISKTCCFQYSHKPLPWTWVRSYEFTSNSCSQRAVIFTTKRGKKVCTHPRKKWVQKYISLLKTPKQL.

An N-terminal signal peptide occupies residues 1 to 23 (MMGLSLASAVLLASLLSLHLGTA). 2 cysteine pairs are disulfide-bonded: C33/C57 and C34/C73.

Belongs to the intercrine beta (chemokine CC) family. Monomer. Ubiquitously expressed at low levels in various tissues including heart and ovary.

The protein localises to the secreted. Its function is as follows. Chemoattractant for eosinophils and basophils. Acts as a ligand for C-C chemokine receptor CCR3 which triggers Ca(2+) mobilization in eosinophils. Also acts as a ligand for CX3C chemokine receptor CX3CR1, inducing cell chemotaxis. The chain is C-C motif chemokine 26 from Homo sapiens (Human).